Here is a 65-residue protein sequence, read N- to C-terminus: Large ribosomal subunit protein bL35 (65 aa).

This sequence belongs to the bacterial ribosomal protein bL35 family.

The sequence is that of Large ribosomal subunit protein bL35 from Prochlorococcus marinus (strain NATL1A).